The primary structure comprises 194 residues: MNKLLESPYDIVLEEVREGKVNPFDVDLDHLIALFRKKAKELKGSEYMLEAGKFLEASSKLLLLKLEYFFPKSQKERKKVSLKEVQEVLIEEGEEDLSRFDTSFLWEYSPEVGRPKSSKGEKPKILEWREFWKLSKERVPLHREPNWQEEAKRVYEEIKRGVFRIRNLRDFIAFLFAYMEYEEVQKEELLRRLL.

To A.aeolicus AQ_423.

This is an uncharacterized protein from Aquifex aeolicus (strain VF5).